The chain runs to 967 residues: Sodium/potassium exporting P-type ATPase 1 (967 aa).

The Cytoplasmic segment spans residues 1-70 (MEGSGDKRHE…GVNPWKILLR (70 aa)). A helical transmembrane segment spans residues 71–91 (QVSNGLTAVLVVAMVVSFAVK). Position 92 (D92) is a topological domain, extracellular. Residues 93-113 (YAEAGVLVIVIAFNTIVGFVQ) form a helical membrane-spanning segment. The Cytoplasmic portion of the chain corresponds to 114 to 254 (EYRAEKTMDA…TQSTPMQRKL (141 aa)). The helical transmembrane segment at 255 to 275 (NLMAYMLLAFALLLALIVFAV) threads the bilayer. At 276-283 (NKFNFSTE) the chain is on the extracellular side. N-linked (GlcNAc...) asparagine glycosylation is present at N279. Residues 284–304 (VVIYAIALSIAIIPEGLIAVI) traverse the membrane as a helical segment. Over 305–732 (TIVQALGVRR…GRRIFSNIKK (428 aa)) the chain is Cytoplasmic. The active-site 4-aspartylphosphate intermediate is D340. Mg(2+) contacts are provided by D340 and T342. The ATP site is built by T342, E425, K478, R523, T587, G588, D589, R651, and K657. D676 contributes to the Mg(2+) binding site. N679 is a binding site for ATP. A helical transmembrane segment spans residues 733 to 753 (FVLHLLSTNVGQVIVLLIGLA). Topologically, residues 754–812 (FKDRTGTSVFPLSPVQILFLNLVTGTPPAMALGIEPASSSVMQVPPHVKGLFTVELIMD) are extracellular. Residues 813-833 (IFIFGTFIGILALASWVLVIY) form a helical membrane-spanning segment. Topologically, residues 834 to 900 (PFGNSDLATL…GGASRFFSNK (67 aa)) are cytoplasmic. The helical transmembrane segment at 901 to 921 (VLVASVFIGALLPIPTIYIGT) threads the bilayer. The Extracellular segment spans residues 922-931 (LNTEVFKQEG). The chain crosses the membrane as a helical span at residues 932 to 952 (ITWEWIIVIVSVFVFFLLSEF). Residues 953-967 (YKLLKRRFIKTPYNM) are Cytoplasmic-facing.

The protein belongs to the cation transport ATPase (P-type) (TC 3.A.3) family. Type IID subfamily. Requires Mg(2+) as cofactor. In terms of processing, the active site is phosphorylated in presence of sodium or potassium and in conditions of higher pH. Not phosphorylated in presence of calcium ions.

It is found in the cell membrane. It carries out the reaction Na(+)(in) + ATP + H2O = Na(+)(out) + ADP + phosphate + H(+). It catalyses the reaction K(+)(in) + ATP + H2O = K(+)(out) + ADP + phosphate + H(+). Functionally, catalyzes the hydrolysis of ATP coupled with the export of sodium and potassium from the cell. May pump potassium inefficiently. May transport other cations such as lithium. Sodium/potassium efflux ATPases are involved in salt tolerance and maintaining the membrane potential across the plasma membrane in high salinity (Na+) or alkaline (K+) environments. The chain is Sodium/potassium exporting P-type ATPase 1 from Physcomitrium patens (Spreading-leaved earth moss).